A 318-amino-acid chain; its full sequence is D-alanine--D-alanine ligase (318 aa).

The 196-residue stretch at K116 to A311 folds into the ATP-grasp domain. S142–T197 is a binding site for ATP. Mg(2+)-binding residues include D265, E278, and N280.

It belongs to the D-alanine--D-alanine ligase family. The cofactor is Mg(2+). It depends on Mn(2+) as a cofactor.

The protein localises to the cytoplasm. The enzyme catalyses 2 D-alanine + ATP = D-alanyl-D-alanine + ADP + phosphate + H(+). It participates in cell wall biogenesis; peptidoglycan biosynthesis. Its function is as follows. Cell wall formation. The chain is D-alanine--D-alanine ligase from Pseudomonas putida (strain GB-1).